We begin with the raw amino-acid sequence, 704 residues long: Elongation factor G (704 aa).

Residues 8–291 (DKVRNIGIMA…AVVDYLASPL (284 aa)) enclose the tr-type G domain. GTP contacts are provided by residues 17-24 (AHIDAGKT), 90-94 (DTPGH), and 144-147 (NKMD).

The protein belongs to the TRAFAC class translation factor GTPase superfamily. Classic translation factor GTPase family. EF-G/EF-2 subfamily.

The protein resides in the cytoplasm. Catalyzes the GTP-dependent ribosomal translocation step during translation elongation. During this step, the ribosome changes from the pre-translocational (PRE) to the post-translocational (POST) state as the newly formed A-site-bound peptidyl-tRNA and P-site-bound deacylated tRNA move to the P and E sites, respectively. Catalyzes the coordinated movement of the two tRNA molecules, the mRNA and conformational changes in the ribosome. The protein is Elongation factor G of Chlorobium luteolum (strain DSM 273 / BCRC 81028 / 2530) (Pelodictyon luteolum).